Consider the following 87-residue polypeptide: U3-theraphotoxin-Cg1c (87 aa).

The N-terminal stretch at 1-23 is a signal peptide; it reads MRTFTLIAILTCAVLVIFHVSAA. The propeptide occupies 24–51; sequence EELEAQDVIQPEDIFTGVATLEEDRIFE. 3 cysteine pairs are disulfide-bonded: Cys-52-Cys-65, Cys-56-Cys-79, and Cys-73-Cys-84.

It belongs to the neurotoxin 12 (Hwtx-2) family. 03 (juruin) subfamily. As to expression, expressed by the venom gland.

It localises to the secreted. Probable ion channel inhibitor. This Chilobrachys guangxiensis (Chinese earth tiger tarantula) protein is U3-theraphotoxin-Cg1c.